A 224-amino-acid chain; its full sequence is GTP cyclohydrolase 1 (224 aa).

The interval 1 to 20 (MKQEKTVSPTVENNRSAESR) is disordered. Positions 114, 117, and 185 each coordinate Zn(2+).

This sequence belongs to the GTP cyclohydrolase I family. As to quaternary structure, toroid-shaped homodecamer, composed of two pentamers of five dimers.

The catalysed reaction is GTP + H2O = 7,8-dihydroneopterin 3'-triphosphate + formate + H(+). The protein operates within cofactor biosynthesis; 7,8-dihydroneopterin triphosphate biosynthesis; 7,8-dihydroneopterin triphosphate from GTP: step 1/1. This is GTP cyclohydrolase 1 from Chlorobaculum tepidum (strain ATCC 49652 / DSM 12025 / NBRC 103806 / TLS) (Chlorobium tepidum).